A 215-amino-acid chain; its full sequence is Heart- and neural crest derivatives-expressed protein 1 (215 aa).

Disordered regions lie at residues 53 to 109 (APDF…RTES) and 166 to 198 (LKKA…EKRI). Residues 65 to 89 (AAAAATAYGPDARPGQSPGRLEALG) are compositionally biased toward low complexity. Basic residues predominate over residues 92–104 (LGRRKGSGPKKER). In terms of domain architecture, bHLH spans 94–146 (RRKGSGPKKERRRTESINSAFAELRECIPNVPADTKLSKIKTLRLATSYIAYL). Thr107 is subject to Phosphothreonine; by PLK4. Ser109 carries the phosphoserine; by PLK4 modification.

Efficient DNA binding requires dimerization with another bHLH protein. Forms homodimers and heterodimers with TCF3 gene products E12 and E47, HAND2 and HEY1, HEY2 and HEYL (hairy-related transcription factors). Interacts with MDFIC. Interacts with SOX15; the interaction enhances HAND1-induced differentiation of trophoblast giant cells. In terms of processing, phosphorylation by PLK4 disrupts the interaction with MDFIC and leads to translocation into the nucleoplasm, allowing dimerization and transcription factor activity. Heart.

The protein resides in the nucleus. It localises to the nucleoplasm. It is found in the nucleolus. Transcription factor that plays an essential role in both trophoblast giant cell differentiation and in cardiac morphogenesis. Binds the DNA sequence 5'-NRTCTG-3' (non-canonical E-box). Acts as a transcriptional repressor of SOX15. In the adult, could be required for ongoing expression of cardiac-specific genes. This is Heart- and neural crest derivatives-expressed protein 1 (HAND1) from Homo sapiens (Human).